The following is a 92-amino-acid chain: DNA-binding protein HU-alpha (92 aa).

It belongs to the bacterial histone-like protein family. As to quaternary structure, heterodimer of an alpha and a beta chain.

Its function is as follows. Histone-like DNA-binding protein which is capable of wrapping DNA to stabilize it, and thus to prevent its denaturation under extreme environmental conditions. In Burkholderia pseudomallei (strain K96243), this protein is DNA-binding protein HU-alpha (hupA).